The chain runs to 416 residues: 26S proteasome regulatory subunit 8 (416 aa).

Residues 1 to 18 (MAPPASTASSADPSKPTA) show a composition bias toward low complexity. The disordered stretch occupies residues 1 to 29 (MAPPASTASSADPSKPTAQKLTEESDEKT). An ATP-binding site is contributed by 200-207 (GPPGTGKT).

Belongs to the AAA ATPase family. Component of the 19S proteasome regulatory particle complex. The 26S proteasome consists of a 20S core particle (CP) and two 19S regulatory subunits (RP). Interacts with elt-2.

The protein localises to the cytoplasm. The protein resides in the nucleus. Its function is as follows. Component of the 26S proteasome, a multiprotein complex involved in the ATP-dependent degradation of ubiquitinated proteins. This complex plays a key role in the maintenance of protein homeostasis by removing misfolded or damaged proteins, which could impair cellular functions, and by removing proteins whose functions are no longer required. Therefore, the proteasome participates in numerous cellular processes, including cell cycle progression, apoptosis, or DNA damage repair. Belongs to the heterohexameric ring of AAA (ATPases associated with diverse cellular activities) proteins that unfolds ubiquitinated target proteins that are concurrently translocated into a proteolytic chamber and degraded into peptides. In addition, regulates gene expression in response to bacterial infection. Binds to the GATA transcription factor elt-2 to control its transcriptional activity and thus the expression of elt-2-dependent genes in response to infection by Gram-negative bacteria such as P.aeruginosa. The chain is 26S proteasome regulatory subunit 8 from Caenorhabditis elegans.